A 430-amino-acid chain; its full sequence is Enolase (430 aa).

Q165 contributes to the (2R)-2-phosphoglycerate binding site. E207 (proton donor) is an active-site residue. Residues D244, E287, and D314 each contribute to the Mg(2+) site. Residues K339, R368, S369, and K390 each contribute to the (2R)-2-phosphoglycerate site. Residue K339 is the Proton acceptor of the active site.

This sequence belongs to the enolase family. Component of the RNA degradosome, a multiprotein complex involved in RNA processing and mRNA degradation. Mg(2+) serves as cofactor.

It localises to the cytoplasm. The protein localises to the secreted. The protein resides in the cell surface. It catalyses the reaction (2R)-2-phosphoglycerate = phosphoenolpyruvate + H2O. It functions in the pathway carbohydrate degradation; glycolysis; pyruvate from D-glyceraldehyde 3-phosphate: step 4/5. Functionally, catalyzes the reversible conversion of 2-phosphoglycerate (2-PG) into phosphoenolpyruvate (PEP). It is essential for the degradation of carbohydrates via glycolysis. The protein is Enolase of Xylella fastidiosa (strain M23).